Reading from the N-terminus, the 612-residue chain is UvrABC system protein C (612 aa).

Positions 20-98 (THSGVYRMLD…IKQHRPKYNI (79 aa)) constitute a GIY-YIG domain. Positions 208–243 (SSVLEEISAKMYQASEDMEYEKAQVYRDQLVVLRKL) constitute a UVR domain.

This sequence belongs to the UvrC family. In terms of assembly, interacts with UvrB in an incision complex.

It is found in the cytoplasm. Its function is as follows. The UvrABC repair system catalyzes the recognition and processing of DNA lesions. UvrC both incises the 5' and 3' sides of the lesion. The N-terminal half is responsible for the 3' incision and the C-terminal half is responsible for the 5' incision. This Francisella tularensis subsp. tularensis (strain WY96-3418) protein is UvrABC system protein C.